A 579-amino-acid chain; its full sequence is uncharacterized protein (579 aa).

A disordered region spans residues methionine 1–glutamate 100. A compositionally biased stretch (polar residues) spans glycine 80–serine 90. The next 11 helical transmembrane spans lie at phenylalanine 148–serine 168, valine 175–proline 195, valine 206–tyrosine 226, glycine 228–leucine 248, valine 279–valine 299, leucine 303–leucine 323, leucine 378–valine 398, tryptophan 407–glycine 427, isoleucine 448–isoleucine 468, serine 504–threonine 524, and leucine 526–valine 546.

This sequence to M.tuberculosis Rv0876c.

It is found in the cell membrane. This is an uncharacterized protein from Mycobacterium leprae (strain TN).